The primary structure comprises 846 residues: Sucrose synthase 6 (846 aa).

Positions 276-755 are GT-B glycosyltransferase; the sequence is CVFTVVIFSI…GLQRIYECYT (480 aa).

Belongs to the glycosyltransferase 1 family. Plant sucrose synthase subfamily.

The catalysed reaction is an NDP-alpha-D-glucose + D-fructose = a ribonucleoside 5'-diphosphate + sucrose + H(+). Functionally, sucrose-cleaving enzyme that provides UDP-glucose and fructose for various metabolic pathways. This chain is Sucrose synthase 6 (SUS6), found in Oryza sativa subsp. japonica (Rice).